Consider the following 91-residue polypeptide: MAHKKAGGSSRNGRDSAGRRLGVKKFGGERVVSGNIIVRQRGTKWHPGANVGIGVDHTLFALADGAVKFLTKDKGRSYVSVVIEQQTEAAE.

The interval 1-22 (MAHKKAGGSSRNGRDSAGRRLG) is disordered.

It belongs to the bacterial ribosomal protein bL27 family.

The chain is Large ribosomal subunit protein bL27 from Methylocella silvestris (strain DSM 15510 / CIP 108128 / LMG 27833 / NCIMB 13906 / BL2).